Here is a 362-residue protein sequence, read N- to C-terminus: Spermidine/putrescine import ATP-binding protein PotA (362 aa).

The ABC transporter domain occupies 4 to 235 (IKLDHITKQY…PVNDFVARFI (232 aa)). Position 37–44 (37–44 (GPSGSGKT)) interacts with ATP.

It belongs to the ABC transporter superfamily. Spermidine/putrescine importer (TC 3.A.1.11.1) family. The complex is composed of two ATP-binding proteins (PotA), two transmembrane proteins (PotB and PotC) and a solute-binding protein (PotD).

The protein localises to the cell membrane. The enzyme catalyses ATP + H2O + polyamine-[polyamine-binding protein]Side 1 = ADP + phosphate + polyamineSide 2 + [polyamine-binding protein]Side 1.. Its function is as follows. Part of the ABC transporter complex PotABCD involved in spermidine/putrescine import. Responsible for energy coupling to the transport system. This is Spermidine/putrescine import ATP-binding protein PotA from Lactobacillus delbrueckii subsp. bulgaricus (strain ATCC BAA-365 / Lb-18).